The chain runs to 116 residues: NADH-ubiquinone oxidoreductase chain 3 (116 aa).

The next 3 membrane-spanning stretches (helical) occupy residues 4 to 24, 56 to 76, and 87 to 107; these read FMVM…LAFW, FFLV…LLPS, and FTLL…IYEW.

The protein belongs to the complex I subunit 3 family.

The protein resides in the mitochondrion membrane. The catalysed reaction is a ubiquinone + NADH + 5 H(+)(in) = a ubiquinol + NAD(+) + 4 H(+)(out). Its function is as follows. Core subunit of the mitochondrial membrane respiratory chain NADH dehydrogenase (Complex I) that is believed to belong to the minimal assembly required for catalysis. Complex I functions in the transfer of electrons from NADH to the respiratory chain. The immediate electron acceptor for the enzyme is believed to be ubiquinone. This is NADH-ubiquinone oxidoreductase chain 3 (MT-ND3) from Petromyzon marinus (Sea lamprey).